Here is a 101-residue protein sequence, read N- to C-terminus: Large ribosomal subunit protein bL25 (101 aa).

This sequence belongs to the bacterial ribosomal protein bL25 family. Part of the 50S ribosomal subunit; part of the 5S rRNA/L5/L18/L25 subcomplex. Contacts the 5S rRNA. Binds to the 5S rRNA independently of L5 and L18.

In terms of biological role, this is one of the proteins that binds to the 5S RNA in the ribosome where it forms part of the central protuberance. The chain is Large ribosomal subunit protein bL25 from Thermosynechococcus vestitus (strain NIES-2133 / IAM M-273 / BP-1).